The following is a 573-amino-acid chain: Isocitrate dehydrogenase kinase/phosphatase (573 aa).

Residues 317–323 and Lys-338 each bind ATP; that span reads APGVRGM. Asp-373 is a catalytic residue.

It belongs to the AceK family.

It localises to the cytoplasm. It carries out the reaction L-seryl-[isocitrate dehydrogenase] + ATP = O-phospho-L-seryl-[isocitrate dehydrogenase] + ADP + H(+). In terms of biological role, bifunctional enzyme which can phosphorylate or dephosphorylate isocitrate dehydrogenase (IDH) on a specific serine residue. This is a regulatory mechanism which enables bacteria to bypass the Krebs cycle via the glyoxylate shunt in response to the source of carbon. When bacteria are grown on glucose, IDH is fully active and unphosphorylated, but when grown on acetate or ethanol, the activity of IDH declines drastically concomitant with its phosphorylation. The protein is Isocitrate dehydrogenase kinase/phosphatase of Pseudomonas fluorescens (strain ATCC BAA-477 / NRRL B-23932 / Pf-5).